Here is a 467-residue protein sequence, read N- to C-terminus: Prenyltransferase GME11375 (467 aa).

Residue E93 participates in L-tryptophan binding. The dimethylallyl diphosphate site is built by R108, K196, Y198, K266, Y268, and Y436.

Belongs to the tryptophan dimethylallyltransferase family.

It functions in the pathway secondary metabolite biosynthesis. In terms of biological role, prenyltransferase; part of the gene cluster that mediates the biosynthesis of dibenzodioxocinones such as pestalotiollide B, a novel class of inhibitors against cholesterol ester transfer protein (CEPT). The biosynthesis initiates from condensation of acetate and malonate units catalyzed by the non-reducing PKS pks8/GME11356. Pks8/GME11356 lacks a thioesterase (TE) domain, which is important to the cyclizing of the third ring of atrochrysone carboxylic acid, and the esterase GME11355 might play the role of TE and catalyzes the cyclization reaction of the C ring. The lactamase-like protein GME11357 (or other beta-lactamases in Pestalotiopsis microspora) probably hydrolyzes the thioester bond between the ACP of pks8/GME11356 and the intermediate to release atrochrysone carboxylic acid, which is spontaneously dehydrates to form endocrocin anthrone. Endocrocin anthrone is further converted to emodin via the endocrocin intermediate. Emodin is then oxidized by several enzymes such as the Baeyer-Villiger oxidase GME11358, the oxidoreductase GME11367, the short chain dehydrogenase/reductase GME11373, as well as by other oxidoreductases from the cluster, to modify the A and C rings and open the B ring, and finally yield monodictyphenone. The prenyltransferase GME11375 may catalyze the addition reaction between the C5 side chains and the carbon bone of dibenzodioxocinones. The remaining biochemical reactions to the final product dibenzodioxocinones should be methylation catalyzed by methyltransferase GME11366 and reduction and lactonization reaction catalyzed by a series of oxidordeuctases. This is Prenyltransferase GME11375 from Pestalotiopsis microspora.